We begin with the raw amino-acid sequence, 59 residues long: Early protein GP1A (59 aa).

This Bacillus phage PZA (Bacteriophage PZA) protein is Early protein GP1A (1A).